A 391-amino-acid chain; its full sequence is Decapping nuclease RAI1 (391 aa).

Glutamate 174 provides a ligand contact to a divalent metal cation. Glutamate 223 serves as a coordination point for substrate. 3 residues coordinate a divalent metal cation: aspartate 225, glutamate 244, and leucine 245. Substrate-binding residues include lysine 246 and glutamine 270.

Belongs to the DXO/Dom3Z family. As to quaternary structure, interacts with RAT1; the interaction is direct, stabilizes RAT1 protein structure and stimulates its exoribonuclease activity. The interaction also stimulates RAI1 pyrophosphohydrolase activity, probably by recruiting it to mRNA substrates. The cofactor is a divalent metal cation.

It is found in the nucleus. The enzyme catalyses a 5'-end NAD(+)-phospho-ribonucleoside in mRNA + H2O = a 5'-end phospho-ribonucleoside in mRNA + NAD(+) + H(+). The catalysed reaction is a 5'-end (N(7)-methyl 5'-triphosphoguanosine)-ribonucleoside-ribonucleotide in mRNA + H2O = a (N(7)-methyl 5'-triphosphoguanosine)-nucleoside + a 5'-end phospho-ribonucleoside in mRNA + H(+). It carries out the reaction a 5'-end triphospho-ribonucleoside in mRNA + H2O = a 5'-end phospho-ribonucleoside in mRNA + diphosphate + H(+). Functionally, decapping enzyme for NAD-capped RNAs: specifically hydrolyzes the nicotinamide adenine dinucleotide (NAD) cap from a subset of RNAs by removing the entire NAD moiety from the 5'-end of an NAD-capped RNA. The NAD-cap is present at the 5'-end of some RNAs and snoRNAs. In contrast to the canonical 5'-end N7 methylguanosine (m7G) cap, the NAD cap promotes mRNA decay. Also acts as a non-canonical decapping enzyme that removes the entire cap structure of m7G capped or incompletely capped RNAs. Has decapping activity toward incomplete 5'-end m7G cap mRNAs such as unmethylated 5'-end-capped RNA (cap0), while it has no activity toward 2'-O-ribose methylated m7G cap (cap1). Also possesses RNA 5'-pyrophosphohydrolase activity by hydrolyzing the 5'-end triphosphate to release pyrophosphates. Stimulates exoribonuclease activity of Rat1, allowing it to degrade RNAs with stable secondary structure more effectively. This is Decapping nuclease RAI1 from Candida albicans (strain SC5314 / ATCC MYA-2876) (Yeast).